Here is a 461-residue protein sequence, read N- to C-terminus: ATP synthase subunit beta (461 aa).

Residue 151–158 coordinates ATP; it reads GGAGVGKT.

It belongs to the ATPase alpha/beta chains family. As to quaternary structure, F-type ATPases have 2 components, CF(1) - the catalytic core - and CF(0) - the membrane proton channel. CF(1) has five subunits: alpha(3), beta(3), gamma(1), delta(1), epsilon(1). CF(0) has three main subunits: a(1), b(2) and c(9-12). The alpha and beta chains form an alternating ring which encloses part of the gamma chain. CF(1) is attached to CF(0) by a central stalk formed by the gamma and epsilon chains, while a peripheral stalk is formed by the delta and b chains.

Its subcellular location is the cell inner membrane. The catalysed reaction is ATP + H2O + 4 H(+)(in) = ADP + phosphate + 5 H(+)(out). Produces ATP from ADP in the presence of a proton gradient across the membrane. The catalytic sites are hosted primarily by the beta subunits. This is ATP synthase subunit beta from Idiomarina loihiensis (strain ATCC BAA-735 / DSM 15497 / L2-TR).